The primary structure comprises 196 residues: Protein LURP-one-related 8 (196 aa).

It belongs to the LOR family.

Its function is as follows. Might be related to the phospholipid scramblase and tubby-like superfamily of membrane tethered transcription factors. In Arabidopsis thaliana (Mouse-ear cress), this protein is Protein LURP-one-related 8.